We begin with the raw amino-acid sequence, 389 residues long: MFSAYKDTIEDGDLVLGWMTRTAIKPIVVEKKEGLFNTRYGAFPHRNMDKYGAQLGSMSKQGFIHLIHPTPELWTLSLPHRTQIVYTTDSSYIVQRLKIRPGSTVIESGTGSGSFTHAISRSAGLAGKVYSYEFHEERYNLAKQEFERHQLTNVIPTHRDVCNDGFDIENIDVNATAVFLDLPAPWTAIPHLERVIDRSVVSRVCCFSPCFEQVVKAVQALQEAGWVDIEMVEVAAKRWESRLEMKRSLDEAITRLRDVKARRETGLAKRNARIKVETETGVEEEESDERDAKRSKTESGHRGYNPWGKGQKIKEGDESFEWTEVSKCEQEIKSHTSYLLFASRLPKLGEEVFDKDMCVRPYSERCPETSTEGAEASTEATEAPARTEA.

S-adenosyl-L-methionine-binding positions include 112 to 114, E133, R138, 160 to 161, and D181; these read SGS and DV. 2 disordered regions span residues 278–313 and 364–389; these read TETGVEEEESDERDAKRSKTESGHRGYNPWGKGQKI and ERCPETSTEGAEASTEATEAPARTEA. A compositionally biased stretch (acidic residues) spans 280–289; sequence TGVEEEESDE. The segment covering 290 to 301 has biased composition (basic and acidic residues); the sequence is RDAKRSKTESGH. A compositionally biased stretch (low complexity) spans 368 to 389; sequence ETSTEGAEASTEATEAPARTEA.

The protein belongs to the class I-like SAM-binding methyltransferase superfamily. TRM61 family. As to quaternary structure, heterotetramer; composed of two copies of TRM6 and two copies of TRM61.

The protein localises to the nucleus. The enzyme catalyses adenosine(58) in tRNA + S-adenosyl-L-methionine = N(1)-methyladenosine(58) in tRNA + S-adenosyl-L-homocysteine + H(+). Its function is as follows. Catalytic subunit of tRNA (adenine-N(1)-)-methyltransferase, which catalyzes the formation of N(1)-methyladenine at position 58 (m1A58) in initiator methionyl-tRNA. The chain is tRNA (adenine(58)-N(1))-methyltransferase catalytic subunit TRM61 (TRM61) from Yarrowia lipolytica (strain CLIB 122 / E 150) (Yeast).